The sequence spans 185 residues: Elongation factor P (185 aa).

The protein belongs to the elongation factor P family.

The protein localises to the cytoplasm. Its pathway is protein biosynthesis; polypeptide chain elongation. Functionally, involved in peptide bond synthesis. Stimulates efficient translation and peptide-bond synthesis on native or reconstituted 70S ribosomes in vitro. Probably functions indirectly by altering the affinity of the ribosome for aminoacyl-tRNA, thus increasing their reactivity as acceptors for peptidyl transferase. The sequence is that of Elongation factor P from Pseudothermotoga lettingae (strain ATCC BAA-301 / DSM 14385 / NBRC 107922 / TMO) (Thermotoga lettingae).